Consider the following 1667-residue polypeptide: Myomesin-1 (1667 aa).

Residues Ser-124 and Ser-142 each carry the phosphoserine modification. Low complexity predominate over residues 192 to 210 (SKQSTASKQSATSKRTTST). Residues 192-217 (SKQSTASKQSATSKRTTSTLQREETF) are disordered. 2 Ig-like C2-type domains span residues 258–349 (PEFI…ASVV) and 376–478 (PYGY…AYVF). Fibronectin type-III domains follow at residues 492 to 587 (APLD…ALDP), 620 to 714 (PPTD…VVGD), and 721 to 814 (APGK…VKAA). The segment at 818–915 (GVSPDVWPQL…PKKKKDPVAV (98 aa)) is disordered. Phosphoserine is present on residues Ser-863 and Ser-867. Low complexity predominate over residues 885–894 (EPLSSPPQEA). Fibronectin type-III domains lie at 918–1016 (APYD…CEEW) and 1023–1122 (PPHS…TRPG). At Ser-1036 the chain carries Phosphoserine. Ig-like C2-type domains are found at residues 1114 to 1212 (PVVA…EEMK), 1340 to 1426 (PHFA…LKLV), and 1555 to 1644 (RVLG…FTVS).

In terms of assembly, homodimer. Interacts with TTN/titin and PNKD. As to expression, ubiquitously expressed in all striated muscles. Expressed in all fiber types.

It localises to the cytoplasm. Its subcellular location is the myofibril. The protein localises to the sarcomere. The protein resides in the m line. May link the intermediate filament cytoskeleton to the M-disk of the myofibrils in striated muscle. May also contact myosin filaments. Also binds beta-integrins. The protein is Myomesin-1 (Myom1) of Mus musculus (Mouse).